The primary structure comprises 1833 residues: Proteasome activator complex subunit 4A (1833 aa).

2 HEAT repeats span residues 460–504 and 983–1022; these read PEGP…LVDC and NFCC…NHSG. The segment at 1095-1122 is disordered; it reads SSSPEPNPGAASEQEELEGRKREEQKNK. A compositionally biased stretch (basic and acidic residues) spans 1111-1122; the sequence is LEGRKREEQKNK. 4 HEAT repeats span residues 1164–1202, 1344–1382, 1626–1664, and 1670–1708; these read LPLP…QLKR, DAFL…GSKH, SDQI…YNLF, and AKAV…CNFL. The tract at residues 1640-1728 is bromodomain-like (BRDL); sequence SRSSSWHARY…ESLSKTRLPK (89 aa).

Belongs to the BLM10 family. In terms of assembly, homodimer. Interacts with the 20S and 26S proteasomes.

The protein localises to the cytoplasm. It localises to the cytosol. It is found in the nucleus. The protein resides in the nucleus speckle. Associated component of the proteasome that specifically recognizes acetylated histones and promotes ATP- and ubiquitin-independent degradation of core histones during DNA damage response. Recognizes and binds acetylated histones via its bromodomain-like (BRDL) region and activates the proteasome by opening the gated channel for substrate entry. Binds to the core proteasome via its C-terminus, which occupies the same binding sites as the proteasomal ATPases, opening the closed structure of the proteasome via an active gating mechanism. involved in DNA damage response in somatic cells: binds to acetylated histones and promotes degradation of histones. This Danio rerio (Zebrafish) protein is Proteasome activator complex subunit 4A (psme4a).